Reading from the N-terminus, the 247-residue chain is MLLLINNLILNDVPTPWGLYFQDSSTPNQEGIIELHDNIMFYLVLILCTVSWLLFSIVKDSSKNPLPHKYLVHGQTIEIIWTILPAVVLLIIAFPSFILLYLCDEVISPAMTIKAIGLQWYWRYEYSDFINDSGETIEFESYVIPEDLLEDGQLRLLDTDTSVVCPVNTHIRFIVSAADVIHDFAIPSLGIKVVASPGRLNQVSALIQREGVYYGMCSETCGVAHSAMPMKIEVVSTKEFLTWLNEQ.

Residues 12–38 (DVPTPWGLYFQDSSTPNQEGIIELHDN) are Mitochondrial intermembrane-facing. A helical transmembrane segment spans residues 39–59 (IMFYLVLILCTVSWLLFSIVK). At 60-78 (DSSKNPLPHKYLVHGQTIE) the chain is on the mitochondrial matrix side. A helical transmembrane segment spans residues 79-101 (IIWTILPAVVLLIIAFPSFILLY). Residues 102-247 (LCDEVISPAM…KEFLTWLNEQ (146 aa)) are Mitochondrial intermembrane-facing. Residues H182, C217, E219, C221, H225, and M228 each contribute to the Cu cation site. E219 lines the Mg(2+) pocket.

Belongs to the cytochrome c oxidase subunit 2 family. As to quaternary structure, component of the cytochrome c oxidase (complex IV, CIV), a multisubunit enzyme composed of a catalytic core of 3 subunits and several supernumerary subunits. The complex exists as a monomer or a dimer and forms supercomplexes (SCs) in the inner mitochondrial membrane with ubiquinol-cytochrome c oxidoreductase (cytochrome b-c1 complex, complex III, CIII). It depends on Cu cation as a cofactor. In terms of processing, the signal sequence of COX2 is processed by IMP1.

The protein resides in the mitochondrion inner membrane. It catalyses the reaction 4 Fe(II)-[cytochrome c] + O2 + 8 H(+)(in) = 4 Fe(III)-[cytochrome c] + 2 H2O + 4 H(+)(out). Component of the cytochrome c oxidase, the last enzyme in the mitochondrial electron transport chain which drives oxidative phosphorylation. The respiratory chain contains 3 multisubunit complexes succinate dehydrogenase (complex II, CII), ubiquinol-cytochrome c oxidoreductase (cytochrome b-c1 complex, complex III, CIII) and cytochrome c oxidase (complex IV, CIV), that cooperate to transfer electrons derived from NADH and succinate to molecular oxygen, creating an electrochemical gradient over the inner membrane that drives transmembrane transport and the ATP synthase. Cytochrome c oxidase is the component of the respiratory chain that catalyzes the reduction of oxygen to water. Electrons originating from reduced cytochrome c in the intermembrane space (IMS) are transferred via the dinuclear copper A center (CU(A)) of subunit 2 and heme A of subunit 1 to the active site in subunit 1, a binuclear center (BNC) formed by heme A3 and copper B (CU(B)). The BNC reduces molecular oxygen to 2 water molecules using 4 electrons from cytochrome c in the IMS and 4 protons from the mitochondrial matrix. This Cyberlindnera saturnus (Yeast) protein is Cytochrome c oxidase subunit 2 (COX2).